The following is a 501-amino-acid chain: Ribose import ATP-binding protein RbsA (501 aa).

2 consecutive ABC transporter domains span residues 6–242 and 253–495; these read LQLS…VGRK and VHGQ…VGKK. 38–45 contacts ATP; that stretch reads GENGAGKS.

The protein belongs to the ABC transporter superfamily. Ribose importer (TC 3.A.1.2.1) family. As to quaternary structure, the complex is composed of an ATP-binding protein (RbsA), two transmembrane proteins (RbsC) and a solute-binding protein (RbsB).

The protein localises to the cell inner membrane. It carries out the reaction D-ribose(out) + ATP + H2O = D-ribose(in) + ADP + phosphate + H(+). Part of the ABC transporter complex RbsABC involved in ribose import. Responsible for energy coupling to the transport system. The protein is Ribose import ATP-binding protein RbsA of Vibrio vulnificus (strain YJ016).